The following is a 146-amino-acid chain: Hemoglobin cathodic subunit beta (146 aa).

The 145-residue stretch at 2-146 (EWSASERSTI…VVSALSKQYF (145 aa)) folds into the Globin domain. Residues His-63 and His-92 each contribute to the heme b site.

The protein belongs to the globin family. In terms of assembly, heterotetramer of two alpha chains and two beta chains. Red blood cells.

Its function is as follows. Involved in oxygen transport from gills to the various peripheral tissues. The protein is Hemoglobin cathodic subunit beta (hbb2) of Anguilla anguilla (European freshwater eel).